A 160-amino-acid polypeptide reads, in one-letter code: Cytochrome b6-f complex subunit 4 (160 aa).

3 helical membrane-spanning segments follow: residues 36 to 56, 95 to 115, and 127 to 147; these read LLYT…GLAV, LLGI…PFIE, and PIAM…GVAA.

Belongs to the cytochrome b family. PetD subfamily. In terms of assembly, the 4 large subunits of the cytochrome b6-f complex are cytochrome b6, subunit IV (17 kDa polypeptide, PetD), cytochrome f and the Rieske protein, while the 4 small subunits are PetG, PetL, PetM and PetN. The complex functions as a dimer.

Its subcellular location is the cellular thylakoid membrane. Functionally, component of the cytochrome b6-f complex, which mediates electron transfer between photosystem II (PSII) and photosystem I (PSI), cyclic electron flow around PSI, and state transitions. In Prochlorothrix hollandica, this protein is Cytochrome b6-f complex subunit 4.